Reading from the N-terminus, the 227-residue chain is Ribonuclease 3 (227 aa).

In terms of domain architecture, RNase III spans 3–130; the sequence is TNAISKIIKY…LIGAIYLDGG (128 aa). Mg(2+) is bound at residue glutamate 43. Residue aspartate 47 is part of the active site. Mg(2+) is bound by residues asparagine 116 and glutamate 119. Glutamate 119 is an active-site residue. In terms of domain architecture, DRBM spans 155 to 224; that stretch reads DAKTILQEWA…ASLMLAKINY (70 aa).

It belongs to the ribonuclease III family. Homodimer. Mg(2+) serves as cofactor.

It is found in the cytoplasm. The catalysed reaction is Endonucleolytic cleavage to 5'-phosphomonoester.. Functionally, digests double-stranded RNA. Involved in the processing of primary rRNA transcript to yield the immediate precursors to the large and small rRNAs (23S and 16S). Processes some mRNAs, and tRNAs when they are encoded in the rRNA operon. Processes pre-crRNA and tracrRNA of type II CRISPR loci if present in the organism. The polypeptide is Ribonuclease 3 (Ehrlichia ruminantium (strain Gardel)).